An 88-amino-acid chain; its full sequence is Alpha-latrotoxin associated low molecular weight protein (88 aa).

The first 18 residues, 1–18 (MSKLFFVAFLCLIISVFA), serve as a signal peptide directing secretion.

Belongs to the arthropod CHH/MIH/GIH/VIH hormone family. As to expression, expressed by the venom gland.

It is found in the secreted. Functionally, may increase the toxicity of alpha-latrotoxin and/or other venom components. Is non-toxic to mice and to the cockroach Periplaneta americana. This chain is Alpha-latrotoxin associated low molecular weight protein, found in Latrodectus hesperus (Western black widow spider).